The chain runs to 468 residues: Envelope glycoprotein C (468 aa).

A signal peptide spans 1–30; it reads MWLPNLVRFVAVAYLICAGAILTYASGASA. Residues 31 to 50 are compositionally biased toward low complexity; that stretch reads SSSQSTPATPTHTTPNLTTA. Positions 31 to 73 are disordered; it reads SSSQSTPATPTHTTPNLTTAHGAGSDNTTNANGTESTHSHETT. Residues 31–431 lie on the Virion surface side of the membrane; it reads SSSQSTPATP…IVEDRPVLTS (401 aa). Residues asparagine 46, asparagine 57, asparagine 62, asparagine 92, asparagine 100, asparagine 131, asparagine 203, asparagine 208, and asparagine 269 are each glycosylated (N-linked (GlcNAc...) asparagine; by host). Cysteine 76 and cysteine 93 are disulfide-bonded. Ig-like domains are found at residues 220 to 311 and 321 to 416; these read PLLD…DEVS and PSVF…DTVV. 3 disulfides stabilise this stretch: cysteine 239–cysteine 301, cysteine 340–cysteine 399, and cysteine 344–cysteine 373. The helical transmembrane segment at 432–451 threads the bilayer; that stretch reads IIAVTCGAAALALVVLITAV. Topologically, residues 452–468 are cytoplasmic; the sequence is CFYCSKPSQAPYKKSDF.

Belongs to the herpesviridae glycoprotein C family. As to quaternary structure, interacts with host complement component C3; this interaction inhibits host immune response by disregulating complement cascade.

Its subcellular location is the virion membrane. Essential for the initial attachment to heparan sulfate moieties of the host cell surface proteoglycans. Also plays a role in host immune evasion by inhibiting the host complement cascade activation. The protein is Envelope glycoprotein C (gC) of Equus caballus (Horse).